Reading from the N-terminus, the 172-residue chain is Transcriptional repressor NrdR (172 aa).

A zinc finger spans residues 3-34 (CPFCRHPDSRVVDSRTTDDGTSIRRRRQCPDC). The ATP-cone domain occupies 46–136 (LMVIKRSGVT…VYRAFDSLED (91 aa)). The tract at residues 152–172 (ERSGGGTCGTGTVPVPAGTAD) is disordered. Low complexity predominate over residues 161–172 (TGTVPVPAGTAD).

It belongs to the NrdR family. Zn(2+) serves as cofactor.

Functionally, negatively regulates transcription of bacterial ribonucleotide reductase nrd genes and operons by binding to NrdR-boxes. The protein is Transcriptional repressor NrdR of Streptomyces clavuligerus.